Reading from the N-terminus, the 336-residue chain is Protein-glutamate methylesterase/protein-glutamine glutaminase 3 (336 aa).

The Response regulatory domain maps to 2–119; it reads KIAIVNDMPM…PNPREAAAPL (118 aa). Aspartate 53 is subject to 4-aspartylphosphate. Residues 147–336 form the CheB-type methylesterase domain; that stretch reads VSRRDRLVAI…APRLMEVFTQ (190 aa). Catalysis depends on residues serine 159, histidine 186, and aspartate 279.

It belongs to the CheB family. Post-translationally, phosphorylated by CheA. Phosphorylation of the N-terminal regulatory domain activates the methylesterase activity.

It localises to the cytoplasm. The enzyme catalyses [protein]-L-glutamate 5-O-methyl ester + H2O = L-glutamyl-[protein] + methanol + H(+). The catalysed reaction is L-glutaminyl-[protein] + H2O = L-glutamyl-[protein] + NH4(+). In terms of biological role, involved in chemotaxis. Part of a chemotaxis signal transduction system that modulates chemotaxis in response to various stimuli. Catalyzes the demethylation of specific methylglutamate residues introduced into the chemoreceptors (methyl-accepting chemotaxis proteins or MCP) by CheR. Also mediates the irreversible deamidation of specific glutamine residues to glutamic acid. This chain is Protein-glutamate methylesterase/protein-glutamine glutaminase 3, found in Pseudomonas syringae pv. tomato (strain ATCC BAA-871 / DC3000).